Here is a 343-residue protein sequence, read N- to C-terminus: Glycerol-3-phosphate dehydrogenase [NAD(P)+] (343 aa).

The NADPH site is built by S11, W12, H32, R33, and K106. The sn-glycerol 3-phosphate site is built by K106, G136, and S138. A140 is an NADPH binding site. Positions 192, 245, 255, 256, and 257 each coordinate sn-glycerol 3-phosphate. Catalysis depends on K192, which acts as the Proton acceptor. NADPH is bound at residue R256. Positions 280 and 282 each coordinate NADPH.

The protein belongs to the NAD-dependent glycerol-3-phosphate dehydrogenase family.

It localises to the cytoplasm. It carries out the reaction sn-glycerol 3-phosphate + NAD(+) = dihydroxyacetone phosphate + NADH + H(+). It catalyses the reaction sn-glycerol 3-phosphate + NADP(+) = dihydroxyacetone phosphate + NADPH + H(+). Its pathway is membrane lipid metabolism; glycerophospholipid metabolism. Catalyzes the reduction of the glycolytic intermediate dihydroxyacetone phosphate (DHAP) to sn-glycerol 3-phosphate (G3P), the key precursor for phospholipid synthesis. The chain is Glycerol-3-phosphate dehydrogenase [NAD(P)+] from Geobacillus thermodenitrificans (strain NG80-2).